A 322-amino-acid chain; its full sequence is Lipoyl synthase (322 aa).

Polar residues predominate over residues 1–12 (MVTVLNTVNQSG). A disordered region spans residues 1–22 (MVTVLNTVNQSGRLRHPEKAHR). [4Fe-4S] cluster contacts are provided by Cys-60, Cys-65, Cys-71, Cys-86, Cys-90, Cys-93, and Ser-299. In terms of domain architecture, Radical SAM core spans 72 to 288 (WEKKHATFMI…ETIGKTKGFL (217 aa)).

Belongs to the radical SAM superfamily. Lipoyl synthase family. [4Fe-4S] cluster serves as cofactor.

It localises to the cytoplasm. The enzyme catalyses [[Fe-S] cluster scaffold protein carrying a second [4Fe-4S](2+) cluster] + N(6)-octanoyl-L-lysyl-[protein] + 2 oxidized [2Fe-2S]-[ferredoxin] + 2 S-adenosyl-L-methionine + 4 H(+) = [[Fe-S] cluster scaffold protein] + N(6)-[(R)-dihydrolipoyl]-L-lysyl-[protein] + 4 Fe(3+) + 2 hydrogen sulfide + 2 5'-deoxyadenosine + 2 L-methionine + 2 reduced [2Fe-2S]-[ferredoxin]. It participates in protein modification; protein lipoylation via endogenous pathway; protein N(6)-(lipoyl)lysine from octanoyl-[acyl-carrier-protein]: step 2/2. Catalyzes the radical-mediated insertion of two sulfur atoms into the C-6 and C-8 positions of the octanoyl moiety bound to the lipoyl domains of lipoate-dependent enzymes, thereby converting the octanoylated domains into lipoylated derivatives. This chain is Lipoyl synthase, found in Brucella abortus (strain S19).